A 409-amino-acid polypeptide reads, in one-letter code: Histidinol dehydrogenase homolog (409 aa).

This sequence belongs to the histidinol dehydrogenase family.

This chain is Histidinol dehydrogenase homolog, found in Synechocystis sp. (strain ATCC 27184 / PCC 6803 / Kazusa).